Here is a 594-residue protein sequence, read N- to C-terminus: 4-alpha-glucanotransferase DPE1, chloroplastic/amyloplastic (594 aa).

Residues 1-37 (MATLSLPLPHLTQAIPARARPRPRPLRGIPARLLSCR) constitute a chloroplast transit peptide.

The protein belongs to the disproportionating enzyme family.

The protein localises to the plastid. Its subcellular location is the chloroplast. The protein resides in the amyloplast. It carries out the reaction Transfers a segment of a (1-&gt;4)-alpha-D-glucan to a new position in an acceptor, which may be glucose or a (1-&gt;4)-alpha-D-glucan.. Its function is as follows. Chloroplastic alpha-glucanotransferase involved in maltotriose metabolism. The protein is 4-alpha-glucanotransferase DPE1, chloroplastic/amyloplastic (DPE1) of Oryza sativa subsp. japonica (Rice).